An 82-amino-acid polypeptide reads, in one-letter code: Conotoxin Gla-TxX (82 aa).

The N-terminal stretch at 1–25 is a signal peptide; it reads MSGHTSVSFLLLSIVALGMVATVIC. 5 positions are modified to 4-carboxyglutamate: Glu30, Glu34, Glu37, Glu40, and Glu41. Position 72 is an asparagine amide (Asn72). The propeptide occupies 77–82; that stretch reads LIHMQK.

In terms of processing, contains 4 disulfide bonds. Expressed by the venom duct.

The protein localises to the secreted. The protein is Conotoxin Gla-TxX of Conus textile (Cloth-of-gold cone).